The chain runs to 239 residues: Leucyl/phenylalanyl-tRNA--protein transferase (239 aa).

Belongs to the L/F-transferase family.

It localises to the cytoplasm. It carries out the reaction N-terminal L-lysyl-[protein] + L-leucyl-tRNA(Leu) = N-terminal L-leucyl-L-lysyl-[protein] + tRNA(Leu) + H(+). The catalysed reaction is N-terminal L-arginyl-[protein] + L-leucyl-tRNA(Leu) = N-terminal L-leucyl-L-arginyl-[protein] + tRNA(Leu) + H(+). It catalyses the reaction L-phenylalanyl-tRNA(Phe) + an N-terminal L-alpha-aminoacyl-[protein] = an N-terminal L-phenylalanyl-L-alpha-aminoacyl-[protein] + tRNA(Phe). Its function is as follows. Functions in the N-end rule pathway of protein degradation where it conjugates Leu, Phe and, less efficiently, Met from aminoacyl-tRNAs to the N-termini of proteins containing an N-terminal arginine or lysine. This Aliivibrio fischeri (strain MJ11) (Vibrio fischeri) protein is Leucyl/phenylalanyl-tRNA--protein transferase.